The following is a 517-amino-acid chain: Ribonuclease Y (517 aa).

A helical membrane pass occupies residues 4-24 (LIYIVILFVGIAAGAFFGISV). In terms of domain architecture, KH spans 207 to 267 (TISTVALPND…LRREVARRTI (61 aa)). One can recognise an HD domain in the interval 333 to 426 (VLAHSVEVAQ…VAAADAISAA (94 aa)).

Belongs to the RNase Y family.

The protein resides in the cell membrane. Functionally, endoribonuclease that initiates mRNA decay. This is Ribonuclease Y from Fervidobacterium nodosum (strain ATCC 35602 / DSM 5306 / Rt17-B1).